The sequence spans 532 residues: Fatty-acid amide hydrolase 2-A (532 aa).

Residues F9–A29 form a helical membrane-spanning segment. Residues K129 and S204 each act as charge relay system in the active site. S228 serves as the catalytic Acyl-ester intermediate.

The protein belongs to the amidase family.

Its subcellular location is the membrane. It catalyses the reaction N-(5Z,8Z,11Z,14Z-eicosatetraenoyl)-ethanolamine + H2O = ethanolamine + (5Z,8Z,11Z,14Z)-eicosatetraenoate. It carries out the reaction (9Z)-octadecenamide + H2O = (9Z)-octadecenoate + NH4(+). The sequence is that of Fatty-acid amide hydrolase 2-A (faah2a) from Danio rerio (Zebrafish).